Here is a 91-residue protein sequence, read N- to C-terminus: MVATNRCCVFALLFALLLVHSLTEAGKGKEILGKIKEKIIEAKDKMKAGWERLTSQSEYACPAIDKFCEDHCAAKKAVGKCDDFKCNCIKL.

The first 25 residues, methionine 1–alanine 25, serve as a signal peptide directing secretion. A BetaSPN-type CS-alpha/beta domain is found at glutamate 58–leucine 91. Intrachain disulfides connect cysteine 61–cysteine 81, cysteine 68–cysteine 86, and cysteine 72–cysteine 88.

This sequence belongs to the long chain scorpion toxin family. Class 2 subfamily. In terms of tissue distribution, expressed by the venom gland.

It is found in the secreted. May function as a voltage-gated potassium channel blocker and may have cytolytic activity. Is often not detected in the tested venom fractions, suggesting that the toxin is likely subject to frequent processing within the venom. Functionally, specific and reversible blocker of the potassium channel Kv1.2/KCNA2 (IC(50)=544 nM). Its function is as follows. Shows cytolytic effects on erythrocytes and induces non-selective pore formation when high concentrations (300 nM) are applied on oocytes. In terms of biological role, does not cause hemolysis, mast cell degranulation, LDH release, and does not have antimicrobial activity. Does not cause edema and pain. The protein is Tityustoxin-19 of Tityus serrulatus (Brazilian scorpion).